The chain runs to 363 residues: S-adenosylmethionine:tRNA ribosyltransferase-isomerase (363 aa).

The protein belongs to the QueA family. As to quaternary structure, monomer.

The protein resides in the cytoplasm. The enzyme catalyses 7-aminomethyl-7-carbaguanosine(34) in tRNA + S-adenosyl-L-methionine = epoxyqueuosine(34) in tRNA + adenine + L-methionine + 2 H(+). It participates in tRNA modification; tRNA-queuosine biosynthesis. Transfers and isomerizes the ribose moiety from AdoMet to the 7-aminomethyl group of 7-deazaguanine (preQ1-tRNA) to give epoxyqueuosine (oQ-tRNA). This Haemophilus influenzae (strain ATCC 51907 / DSM 11121 / KW20 / Rd) protein is S-adenosylmethionine:tRNA ribosyltransferase-isomerase.